The sequence spans 260 residues: MMRLSGADKMSPSERVQLLESRLGLSFSRMETALEALTHKTYVNETRDKELKDNQRLEFLGDSVVNLAVSHRLMARCPGLPEGDLTKMRARVVNEDGLARVARTIPLGDLLLLGRGELMSGGREKNSVLADALEAVFGAVFLTSGLDAAVTLVDRYFADLLDEVSSGQGRLDYKTLLQEMAHERLKLQPRYRVVSESGPEHSKVFEVELMLGETAFARATGRSKKEAEQSAAQATLEKLREDAACPTSPPPGTPRHDTPA.

The RNase III domain occupies V16–G145. Residue E58 participates in Mg(2+) binding. D62 is a catalytic residue. Positions 131 and 134 each coordinate Mg(2+). The active site involves E134. The DRBM domain maps to D172 to E241. Positions A219–A260 are disordered.

It belongs to the ribonuclease III family. Homodimer. Requires Mg(2+) as cofactor.

It is found in the cytoplasm. The enzyme catalyses Endonucleolytic cleavage to 5'-phosphomonoester.. Functionally, digests double-stranded RNA. Involved in the processing of primary rRNA transcript to yield the immediate precursors to the large and small rRNAs (23S and 16S). Processes some mRNAs, and tRNAs when they are encoded in the rRNA operon. Processes pre-crRNA and tracrRNA of type II CRISPR loci if present in the organism. This Myxococcus xanthus (strain DK1622) protein is Ribonuclease 3.